Consider the following 321-residue polypeptide: Putative ribose-phosphate pyrophosphokinase 2 (321 aa).

Residues 41-43 (DGE) and 100-101 (RQ) each bind ATP. A Mg(2+)-binding site is contributed by His-134. D-ribose 5-phosphate contacts are provided by residues Asp-223 and 227-231 (NTGVT).

Belongs to the ribose-phosphate pyrophosphokinase family. Class I subfamily. As to quaternary structure, homohexamer. Mg(2+) is required as a cofactor.

It is found in the cytoplasm. It carries out the reaction D-ribose 5-phosphate + ATP = 5-phospho-alpha-D-ribose 1-diphosphate + AMP + H(+). It participates in metabolic intermediate biosynthesis; 5-phospho-alpha-D-ribose 1-diphosphate biosynthesis; 5-phospho-alpha-D-ribose 1-diphosphate from D-ribose 5-phosphate (route I): step 1/1. Involved in the biosynthesis of the central metabolite phospho-alpha-D-ribosyl-1-pyrophosphate (PRPP) via the transfer of pyrophosphoryl group from ATP to 1-hydroxyl of ribose-5-phosphate (Rib-5-P). The sequence is that of Putative ribose-phosphate pyrophosphokinase 2 from Lactococcus lactis subsp. lactis (strain IL1403) (Streptococcus lactis).